A 237-amino-acid chain; its full sequence is Phosphoribosylaminoimidazole-succinocarboxamide synthase (237 aa).

This sequence belongs to the SAICAR synthetase family.

The catalysed reaction is 5-amino-1-(5-phospho-D-ribosyl)imidazole-4-carboxylate + L-aspartate + ATP = (2S)-2-[5-amino-1-(5-phospho-beta-D-ribosyl)imidazole-4-carboxamido]succinate + ADP + phosphate + 2 H(+). Its pathway is purine metabolism; IMP biosynthesis via de novo pathway; 5-amino-1-(5-phospho-D-ribosyl)imidazole-4-carboxamide from 5-amino-1-(5-phospho-D-ribosyl)imidazole-4-carboxylate: step 1/2. This is Phosphoribosylaminoimidazole-succinocarboxamide synthase from Enterobacter sp. (strain 638).